A 323-amino-acid polypeptide reads, in one-letter code: Methenyltetrahydromethanopterin cyclohydrolase (323 aa).

Belongs to the MCH family.

The protein localises to the cytoplasm. It carries out the reaction 5,10-methenyl-5,6,7,8-tetrahydromethanopterin + H2O = N(5)-formyl-5,6,7,8-tetrahydromethanopterin + H(+). The protein operates within one-carbon metabolism; methanogenesis from CO(2); 5,10-methenyl-5,6,7,8-tetrahydromethanopterin from CO(2): step 3/3. Its function is as follows. Catalyzes the reversible interconversion of 5-formyl-H(4)MPT to methenyl-H(4)MPT(+). The protein is Methenyltetrahydromethanopterin cyclohydrolase of Methanococcus maripaludis (strain C7 / ATCC BAA-1331).